The chain runs to 160 residues: Major pollen allergen Bet v 1-E (160 aa).

4 residues coordinate brassinolide: Lys55, Tyr82, Tyr84, and Asn101.

The protein belongs to the BetVI family.

It is found in the cytoplasm. In terms of biological role, may be a general steroid carrier protein. The chain is Major pollen allergen Bet v 1-E (BETV1E) from Betula pendula (European white birch).